Reading from the N-terminus, the 344-residue chain is 3,4-dihydroxy-2-butanone 4-phosphate synthase (344 aa).

Residues 1–202 (MILKRVTEAL…VSDLISYRLE (202 aa)) form a DHBP synthase region. Residues 27-28 (RE), Asp-32, 139-143 (RTGHT), and Glu-163 contribute to the D-ribulose 5-phosphate site. Residue Glu-28 participates in Mg(2+) binding. His-142 is a Mg(2+) binding site. Residues 203–344 (NESLLKMFCQ…GLKLVETISL (142 aa)) form a GTP cyclohydrolase II-like region.

It in the N-terminal section; belongs to the DHBP synthase family. This sequence in the C-terminal section; belongs to the GTP cyclohydrolase II family. Requires Mg(2+) as cofactor. The cofactor is Mn(2+).

The enzyme catalyses D-ribulose 5-phosphate = (2S)-2-hydroxy-3-oxobutyl phosphate + formate + H(+). Its pathway is cofactor biosynthesis; riboflavin biosynthesis; 2-hydroxy-3-oxobutyl phosphate from D-ribulose 5-phosphate: step 1/1. In terms of biological role, catalyzes the conversion of D-ribulose 5-phosphate to formate and 3,4-dihydroxy-2-butanone 4-phosphate. The chain is 3,4-dihydroxy-2-butanone 4-phosphate synthase (ribB) from Helicobacter pylori (strain ATCC 700392 / 26695) (Campylobacter pylori).